Here is a 232-residue protein sequence, read N- to C-terminus: 2-C-methyl-D-erythritol 4-phosphate cytidylyltransferase (232 aa).

It belongs to the IspD/TarI cytidylyltransferase family. IspD subfamily.

It catalyses the reaction 2-C-methyl-D-erythritol 4-phosphate + CTP + H(+) = 4-CDP-2-C-methyl-D-erythritol + diphosphate. The protein operates within isoprenoid biosynthesis; isopentenyl diphosphate biosynthesis via DXP pathway; isopentenyl diphosphate from 1-deoxy-D-xylulose 5-phosphate: step 2/6. Its function is as follows. Catalyzes the formation of 4-diphosphocytidyl-2-C-methyl-D-erythritol from CTP and 2-C-methyl-D-erythritol 4-phosphate (MEP). The protein is 2-C-methyl-D-erythritol 4-phosphate cytidylyltransferase of Geobacter metallireducens (strain ATCC 53774 / DSM 7210 / GS-15).